The chain runs to 198 residues: Elongation factor Ts (198 aa).

Positions 81–84 (TDFV) are involved in Mg(2+) ion dislocation from EF-Tu.

This sequence belongs to the EF-Ts family.

Its subcellular location is the cytoplasm. Functionally, associates with the EF-Tu.GDP complex and induces the exchange of GDP to GTP. It remains bound to the aminoacyl-tRNA.EF-Tu.GTP complex up to the GTP hydrolysis stage on the ribosome. In Pseudothermotoga lettingae (strain ATCC BAA-301 / DSM 14385 / NBRC 107922 / TMO) (Thermotoga lettingae), this protein is Elongation factor Ts.